We begin with the raw amino-acid sequence, 188 residues long: MPLDKVLQEIQQKGEEEVRRIREETEKEVEKILAEAKAEAEEILKKAREEAEKEAEAIRRQEISSVKLEMKRELLNVQKEILEEVFNLLRQKVRDMDEETRKKILKNLLEKNASPGMVVYSRKEDEDIVKELIKELKLDVTYGGNIDCIGGVILEDPAGDIRLNLTFDELVSQVYEQKLSEVSKLLFK.

This sequence belongs to the V-ATPase E subunit family. Has multiple subunits with at least A(3), B(3), C, D, E, F, H, I and proteolipid K(x).

It localises to the cell membrane. Functionally, component of the A-type ATP synthase that produces ATP from ADP in the presence of a proton gradient across the membrane. In Archaeoglobus fulgidus (strain ATCC 49558 / DSM 4304 / JCM 9628 / NBRC 100126 / VC-16), this protein is A-type ATP synthase subunit E.